Here is a 54-residue protein sequence, read N- to C-terminus: uncharacterized protein (54 aa).

The interval 34 to 54 (NNREKQKSGKLRELRRGFKTF) is disordered.

This is an uncharacterized protein from Acidianus two-tailed virus (ATV).